Here is a 124-residue protein sequence, read N- to C-terminus: MATINQLVRKPRSVKAAKSNVPALEACPQKRGVCTRVYTTTPKKPNSALRKVCRVRLTNGFEVTSYIGGEGHNLQEHSVILIRGGRVKDLPGVRYHTVRGALDCSGVKDRKQARSKYGVKKPKA.

At Asp-89 the chain carries 3-methylthioaspartic acid.

Belongs to the universal ribosomal protein uS12 family. As to quaternary structure, part of the 30S ribosomal subunit. Contacts proteins S8 and S17. May interact with IF1 in the 30S initiation complex.

Functionally, with S4 and S5 plays an important role in translational accuracy. Its function is as follows. Interacts with and stabilizes bases of the 16S rRNA that are involved in tRNA selection in the A site and with the mRNA backbone. Located at the interface of the 30S and 50S subunits, it traverses the body of the 30S subunit contacting proteins on the other side and probably holding the rRNA structure together. The combined cluster of proteins S8, S12 and S17 appears to hold together the shoulder and platform of the 30S subunit. This chain is Small ribosomal subunit protein uS12, found in Serratia proteamaculans (strain 568).